A 336-amino-acid polypeptide reads, in one-letter code: Dihydroorotate dehydrogenase (quinone) (336 aa).

FMN-binding positions include 62-66 (AGLDK) and Thr86. Lys66 is a binding site for substrate. Position 111–115 (111–115 (NRMGF)) interacts with substrate. Residues Asn139 and Asn172 each contribute to the FMN site. Asn172 is a substrate binding site. Ser175 acts as the Nucleophile in catalysis. Asn177 provides a ligand contact to substrate. FMN-binding residues include Lys217 and Thr245. 246–247 (NT) is a binding site for substrate. Residues Gly268, Gly297, and 318 to 319 (YS) each bind FMN.

It belongs to the dihydroorotate dehydrogenase family. Type 2 subfamily. In terms of assembly, monomer. FMN serves as cofactor.

The protein localises to the cell membrane. The enzyme catalyses (S)-dihydroorotate + a quinone = orotate + a quinol. Its pathway is pyrimidine metabolism; UMP biosynthesis via de novo pathway; orotate from (S)-dihydroorotate (quinone route): step 1/1. In terms of biological role, catalyzes the conversion of dihydroorotate to orotate with quinone as electron acceptor. This Aeromonas hydrophila subsp. hydrophila (strain ATCC 7966 / DSM 30187 / BCRC 13018 / CCUG 14551 / JCM 1027 / KCTC 2358 / NCIMB 9240 / NCTC 8049) protein is Dihydroorotate dehydrogenase (quinone).